Consider the following 1123-residue polypeptide: Phytochrome A (1123 aa).

The segment covering 1–14 (MSSSRPSQSSTTSS) has biased composition (low complexity). The segment at 1-20 (MSSSRPSQSSTTSSRSKHSA) is disordered. Positions 218–401 (SMERLCDTMV…VFAILVNKEL (184 aa)) constitute a GAF domain. Residue Cys323 coordinates phytochromobilin. Residues 617–687 (VTAEMVRLIE…KMLELALQGQ (71 aa)) form the PAS 1 domain. Residues 690 to 746 (RNVEFEIKTHGPSRDSSPISLIVNACASKDVRDSVVGVCFIAQDITGQKSIMDKFTR) form the PAC domain. Positions 747 to 821 (IEGDYRAIIQ…KNQEAFVNFG (75 aa)) constitute a PAS 2 domain. Residues 901–1118 (YIRRQIRNPL…TFIISVELAV (218 aa)) form the Histidine kinase domain.

The protein belongs to the phytochrome family. Homodimer. Contains one covalently linked phytochromobilin chromophore.

Functionally, regulatory photoreceptor which exists in two forms that are reversibly interconvertible by light: the Pr form that absorbs maximally in the red region of the spectrum and the Pfr form that absorbs maximally in the far-red region. Photoconversion of Pr to Pfr induces an array of morphogenic responses, whereas reconversion of Pfr to Pr cancels the induction of those responses. Pfr controls the expression of a number of nuclear genes including those encoding the small subunit of ribulose-bisphosphate carboxylase, chlorophyll A/B binding protein, protochlorophyllide reductase, rRNA, etc. It also controls the expression of its own gene(s) in a negative feedback fashion. This chain is Phytochrome A (PHYA), found in Solanum tuberosum (Potato).